The sequence spans 453 residues: Tryptophan dimethylallyltransferase cnsF (453 aa).

L-tryptophan-binding positions include 84–85 (IL) and glutamate 93. Residues arginine 104, lysine 190, and tyrosine 192 each contribute to the substrate site. The L-tryptophan site is built by tyrosine 194 and arginine 248. Substrate-binding residues include arginine 261, lysine 263, tyrosine 265, glutamine 347, and tyrosine 349.

The protein belongs to the tryptophan dimethylallyltransferase family. As to quaternary structure, homodimer.

The catalysed reaction is L-tryptophan + dimethylallyl diphosphate = 4-(3-methylbut-2-enyl)-L-tryptophan + diphosphate. Its pathway is alkaloid biosynthesis. In terms of biological role, tryptophan dimethylallyltransferase; part of the gene cluster that mediates the biosynthesis of communesins, a prominent class of indole alkaloids with great potential as pharmaceuticals. Communesins are biosynthesized by the coupling of tryptamine and aurantioclavine, two building blocks derived from L-tryptophan. The L-tryptophan decarboxylase cnsB converts L-tryptophan to tryptamine, whereas the tryptophan dimethylallyltransferase cnsF converts L-tryptophan to 4-dimethylallyl tryptophan which is further transformed to aurantioclavine by the aurantioclavine synthase cnsA, probably aided by the catalase cnsD. The cytochrome P450 monooxygenase cnsC catalyzes the heterodimeric coupling between the two different indole moieties, tryptamine and aurantioclavine, to construct vicinal quaternary stereocenters and yield the heptacyclic communesin scaffold. The O-methyltransferase cnsE then methylates the communesin scaffold to produce communesin K, the simplest characterized communesin that contains the heptacyclic core. The dioxygenase cnsJ converts communesin K into communesin I. Acylation to introduce the hexadienyl group at position N16 of communesin I by the acyltransferase cnsK leads to the production of communesin B. The hexadienyl group is produced by the highly reducing polyketide synthase cnsI, before being hydrolytically removed from cnsI by the serine hydrolase cnsH, converted into hexadienyl-CoA by the CoA ligase cnsG, and then transferred to communesin I by cnsK. Surprisingly, cnsK may also be a promiscuous acyltransferase that can tolerate a range of acyl groups, including acetyl-, propionyl-, and butyryl-CoA, which lead to communesins A, G and H respectively. The roles of the alpha-ketoglutarate-dependent dioxygenases cnsM and cnsP have still to be determined. The chain is Tryptophan dimethylallyltransferase cnsF from Penicillium expansum (Blue mold rot fungus).